The following is a 618-amino-acid chain: MSNVLLSKLSSELADLDGQVSQIDQQISQLRRKKAELIQKKQALERKIEMKTNEDSDVVLDRWDQDSFPWSDEANQILKNKFRLEKFRPLQSAAINAVMSKEDAIVILSTGGGKSLCYQLPALLAKGLTLVISPLVSLVEDQIMQLQKLGIDAASLNANTPKDEAKRVEQAITKGSTELRLLYVTPEKLAKSKRMMNQLEKSLGVGYLKLIAIDEVHCCSQWGHDFRTDYSFLNVLKRQFKGVPILGLTATATSNVLDDVKKMLGIPVAIVFRAGFNRANLNYKVLTKPGSEDECVEKIVRTIKRKFSGKTGIIYCLSRNDCEKLAKSLKANGIRAKHYHAYMEPVDRSAAHQKWVSGEIQVIVATVAFGMGIDKPDVRFVIHHSLPKSIENYYQESGRAGRDGLPATCILYYRMSDIFKQSSMIQQEQTGIANLYNMVRYASDTVTCRRVKLAEHFEEAWEPSWCQKQCDVCEKSSNSPGTATEDVSKEAVVVINIIEENLSSAKDGSGRITGNKLLDLLSKKLKGRRTKDFCEKLIVHLLLESYLQEDFHYTVYSVISYVVVGLKWRVYNRKDEIPMTLDNTKKGRAEENNRKRKAAVTSSDEEVDVGDDDDVITL.

A Helicase ATP-binding domain is found at 95–270 (INAVMSKEDA…KKMLGIPVAI (176 aa)). 108–115 (LSTGGGKS) contributes to the ATP binding site. The short motif at 214 to 217 (DEVH) is the DEVH box element. One can recognise a Helicase C-terminal domain in the interval 295–443 (CVEKIVRTIK…NLYNMVRYAS (149 aa)). The Zn(2+) site is built by Cys-448, Cys-466, Cys-470, and Cys-473. Positions 586–618 (KGRAEENNRKRKAAVTSSDEEVDVGDDDDVITL) are disordered. Acidic residues predominate over residues 603-618 (SDEEVDVGDDDDVITL).

The protein belongs to the helicase family. RecQ subfamily. The cofactor is Zn(2+).

Its subcellular location is the nucleus. The enzyme catalyses Couples ATP hydrolysis with the unwinding of duplex DNA by translocating in the 3'-5' direction.. It carries out the reaction ATP + H2O = ADP + phosphate + H(+). In terms of biological role, DNA helicase that may play a role in the repair of DNA that is damaged by ultraviolet light or other mutagens. Exhibits a magnesium-dependent ATP-dependent DNA-helicase activity that unwinds single- and double-stranded DNA in a 3'-5' direction. This is Putative ATP-dependent DNA helicase Q1 from Caenorhabditis briggsae.